Here is a 494-residue protein sequence, read N- to C-terminus: Lysine--tRNA ligase (494 aa).

Mg(2+) contacts are provided by E399 and E406.

This sequence belongs to the class-II aminoacyl-tRNA synthetase family. Mg(2+) is required as a cofactor.

The protein localises to the cytoplasm. The catalysed reaction is tRNA(Lys) + L-lysine + ATP = L-lysyl-tRNA(Lys) + AMP + diphosphate. The polypeptide is Lysine--tRNA ligase (lysS) (Saccharolobus solfataricus (strain ATCC 35092 / DSM 1617 / JCM 11322 / P2) (Sulfolobus solfataricus)).